The primary structure comprises 272 residues: Ribosome maturation factor RimP (272 aa).

A disordered region spans residues 209-272; that stretch reads QNLGILPPPP…RGDIDPPEGD (64 aa). Over residues 250 to 266 the composition is skewed to basic and acidic residues; it reads NTKEHRLAAERLRRGDI.

It belongs to the RimP family.

The protein resides in the cytoplasm. Required for maturation of 30S ribosomal subunits. This is Ribosome maturation factor RimP from Rhodopseudomonas palustris (strain BisA53).